The primary structure comprises 90 residues: DNA-binding protein HU-alpha (90 aa).

It belongs to the bacterial histone-like protein family. As to quaternary structure, heterodimer of an alpha and a beta chain.

In terms of biological role, histone-like DNA-binding protein which is capable of wrapping DNA to stabilize it, and thus to prevent its denaturation under extreme environmental conditions. The chain is DNA-binding protein HU-alpha (hupA) from Pseudomonas aeruginosa (strain ATCC 15692 / DSM 22644 / CIP 104116 / JCM 14847 / LMG 12228 / 1C / PRS 101 / PAO1).